Reading from the N-terminus, the 331-residue chain is Methionyl-tRNA formyltransferase (331 aa).

Residue 110-113 coordinates (6S)-5,6,7,8-tetrahydrofolate; the sequence is SLLP. A disordered region spans residues 312–331; that stretch reads HAPAERVSAAGSPAGAGGAP.

Belongs to the Fmt family.

The enzyme catalyses L-methionyl-tRNA(fMet) + (6R)-10-formyltetrahydrofolate = N-formyl-L-methionyl-tRNA(fMet) + (6S)-5,6,7,8-tetrahydrofolate + H(+). Functionally, attaches a formyl group to the free amino group of methionyl-tRNA(fMet). The formyl group appears to play a dual role in the initiator identity of N-formylmethionyl-tRNA by promoting its recognition by IF2 and preventing the misappropriation of this tRNA by the elongation apparatus. This is Methionyl-tRNA formyltransferase from Frankia alni (strain DSM 45986 / CECT 9034 / ACN14a).